Consider the following 279-residue polypeptide: Shikimate dehydrogenase (NADP(+)) (279 aa).

Shikimate is bound by residues 19-21 and Thr66; that span reads SRS. The active-site Proton acceptor is the Lys70. Shikimate-binding residues include Asn91 and Asp106. Residues 129 to 133, 152 to 157, and Ile218 each bind NADP(+); these read GAGGA and NRTLER. Shikimate is bound at residue Tyr220. Gly241 provides a ligand contact to NADP(+).

Belongs to the shikimate dehydrogenase family. Homodimer.

It catalyses the reaction shikimate + NADP(+) = 3-dehydroshikimate + NADPH + H(+). It participates in metabolic intermediate biosynthesis; chorismate biosynthesis; chorismate from D-erythrose 4-phosphate and phosphoenolpyruvate: step 4/7. In terms of biological role, involved in the biosynthesis of the chorismate, which leads to the biosynthesis of aromatic amino acids. Catalyzes the reversible NADPH linked reduction of 3-dehydroshikimate (DHSA) to yield shikimate (SA). This is Shikimate dehydrogenase (NADP(+)) from Gluconobacter oxydans (strain 621H) (Gluconobacter suboxydans).